We begin with the raw amino-acid sequence, 391 residues long: GATA-binding factor 6-A (391 aa).

Positions 57–111 (GAHSVNSHWSQATSESSSFNNSSPHTSSRYHYPPSPPMHNGSTRDTGYSSSLTVS) are disordered. The segment covering 66 to 83 (SQATSESSSFNNSSPHTS) has biased composition (low complexity). Over residues 96 to 111 (NGSTRDTGYSSSLTVS) the composition is skewed to polar residues. GATA-type zinc fingers lie at residues 182 to 206 (CVNC…CNAC) and 236 to 260 (CANC…CNAC). A disordered region spans residues 274–355 (AMKKEGIQTR…TESTSPNSNT (82 aa)). Basic residues predominate over residues 282-291 (TRKRKPKTLN). Residues 292 to 319 (KSKSSSSNGNSSHQISMTPTSTTSSTNS) show a composition bias toward low complexity. Over residues 326–355 (GSPSQNTTPVVASSLMSTQQTESTSPNSNT) the composition is skewed to polar residues.

As to expression, in embryos, expressed in the presumptive heart mesoderm. In adults, expressed at high levels in heart, small intestine, and stomach and at lower levels in lung, pancreas and colon.

It localises to the nucleus. In terms of biological role, transcriptional activator that binds 5'-GATA-3'-containing motifs within gene promoters. Regulates cardiac-specific transcription during embryogenesis and thereby cardiogenesis. The sequence is that of GATA-binding factor 6-A (gata6-a) from Xenopus laevis (African clawed frog).